The following is a 78-amino-acid chain: Small ribosomal subunit protein bS18B (78 aa).

Belongs to the bacterial ribosomal protein bS18 family. In terms of assembly, part of the 30S ribosomal subunit. Forms a tight heterodimer with protein bS6.

Binds as a heterodimer with protein bS6 to the central domain of the 16S rRNA, where it helps stabilize the platform of the 30S subunit. This chain is Small ribosomal subunit protein bS18B, found in Streptomyces griseus subsp. griseus (strain JCM 4626 / CBS 651.72 / NBRC 13350 / KCC S-0626 / ISP 5235).